Consider the following 237-residue polypeptide: uncharacterized protein (237 aa).

This is an uncharacterized protein from Methanocaldococcus jannaschii (strain ATCC 43067 / DSM 2661 / JAL-1 / JCM 10045 / NBRC 100440) (Methanococcus jannaschii).